Here is a 250-residue protein sequence, read N- to C-terminus: Ribosomal RNA-processing protein 15 (250 aa).

Residues 1–27 are compositionally biased toward basic and acidic residues; sequence MGSKHRVDTKDKKRTRKNAEFGREKRN. A disordered region spans residues 1-101; that stretch reads MGSKHRVDTK…NSKHDDGSTG (101 aa). Composition is skewed to acidic residues over residues 43 to 53 and 67 to 83; these read MEGDEAEEDEQ and EQSD…EDDD. Phosphoserine is present on Ser-69.

This sequence belongs to the RRP15 family.

The protein resides in the nucleus. It localises to the nucleolus. Functionally, constituent of pre-60S ribosomal particles. Required for large subunit rRNA maturation, in particular processing of the 27S pre-rRNA at the A3 and B1 sites to yield 5.8S and 25S rRNA. The chain is Ribosomal RNA-processing protein 15 from Saccharomyces cerevisiae (strain ATCC 204508 / S288c) (Baker's yeast).